A 151-amino-acid polypeptide reads, in one-letter code: Large ribosomal subunit protein uL13 (151 aa).

The segment at 129 to 151 (PTHPHDAQKPKELNINTIPGAES) is disordered. A compositionally biased stretch (basic and acidic residues) spans 131–140 (HPHDAQKPKE).

Belongs to the universal ribosomal protein uL13 family. In terms of assembly, part of the 50S ribosomal subunit.

Its function is as follows. This protein is one of the early assembly proteins of the 50S ribosomal subunit, although it is not seen to bind rRNA by itself. It is important during the early stages of 50S assembly. This Trichormus variabilis (strain ATCC 29413 / PCC 7937) (Anabaena variabilis) protein is Large ribosomal subunit protein uL13.